We begin with the raw amino-acid sequence, 457 residues long: F-box only protein 13 (457 aa).

Residues 64–110 form the F-box domain; sequence EFPMDDLNDDVLERVLSWLPTSCFFRMSSVCKRWKSSQTSKSFKLAC.

The polypeptide is F-box only protein 13 (FBX13) (Arabidopsis thaliana (Mouse-ear cress)).